The following is a 386-amino-acid chain: Peroxisomal membrane protein PEX13 (386 aa).

Residues 1–76 are disordered; it reads MSSTAVPRPK…SSGTYGESNT (76 aa). Residues 1–263 are Lumenal-facing; it reads MSSTAVPRPK…KATRRKISWK (263 aa). Positions 23-39 are enriched in polar residues; the sequence is RNAQSLSAMMTSNQQDS. Low complexity predominate over residues 44–55; the sequence is ESNNSNSASESA. Polar residues predominate over residues 65-76; sequence LNSSGTYGESNT. The helical transmembrane segment at 264 to 280 threads the bilayer; that stretch reads PLLFFLMAVFGFPYLLN. Topologically, residues 281–386 are cytoplasmic; it reads KFITKLQTSG…EHVDDETRTH (106 aa). The 67-residue stretch at 306–372 folds into the SH3 domain; it reads SKLEFARALY…PYNYIEIIKR (67 aa).

This sequence belongs to the peroxin-13 family. Interacts (via SH3 domain) with PEX14 (via SH3-binding motif); forming the PEX13-PEX14 docking complex.

The protein resides in the peroxisome membrane. Its function is as follows. Component of the PEX13-PEX14 docking complex, a translocon channel that specifically mediates the import of peroxisomal cargo proteins bound to PEX5 or PEX21 receptors. The PEX13-PEX14 docking complex forms a large import pore which can be opened to a diameter of about 9 nm. Mechanistically, PEX5 (or PEX21) receptor along with cargo proteins associates with the PEX14 subunit of the PEX13-PEX14 docking complex in the cytosol, leading to the insertion of the receptor into the organelle membrane with the concomitant translocation of the cargo into the peroxisome matrix. In Saccharomyces cerevisiae (strain ATCC 204508 / S288c) (Baker's yeast), this protein is Peroxisomal membrane protein PEX13.